The chain runs to 324 residues: dITP/XTP pyrophosphatase (324 aa).

A unknown region spans residues 1–126; sequence MTKSIFEYKD…SDNKSDFGDV (126 aa). Positions 127–324 are NTP pyrophosphatase; that stretch reads LLIATRNEGK…EVFPAWQNKQ (198 aa). Residue 131-136 coordinates substrate; it reads TRNEGK. The active-site Proton acceptor is Asp193. Asp193 contributes to the Mg(2+) binding site. Residues Ser194, 277 to 280, Lys300, and 305 to 306 contribute to the substrate site; these read FGYD and HR.

Belongs to the HAM1 NTPase family. As to quaternary structure, homodimer. Mg(2+) serves as cofactor.

The enzyme catalyses XTP + H2O = XMP + diphosphate + H(+). It catalyses the reaction dITP + H2O = dIMP + diphosphate + H(+). It carries out the reaction ITP + H2O = IMP + diphosphate + H(+). In terms of biological role, pyrophosphatase that catalyzes the hydrolysis of nucleoside triphosphates to their monophosphate derivatives, with a high preference for the non-canonical purine nucleotides XTP (xanthosine triphosphate), dITP (deoxyinosine triphosphate) and ITP. Seems to function as a house-cleaning enzyme that removes non-canonical purine nucleotides from the nucleotide pool, thus preventing their incorporation into DNA/RNA and avoiding chromosomal lesions. This is dITP/XTP pyrophosphatase from Streptococcus thermophilus (strain ATCC BAA-250 / LMG 18311).